We begin with the raw amino-acid sequence, 807 residues long: DNA gyrase subunit B (807 aa).

Positions 429-543 constitute a Toprim domain; that stretch reads SELFIVEGDS…KGYLYIAQPP (115 aa). Glutamate 435, aspartate 508, and aspartate 510 together coordinate Mg(2+).

It belongs to the type II topoisomerase GyrB family. Heterotetramer, composed of two GyrA and two GyrB chains. In the heterotetramer, GyrA contains the active site tyrosine that forms a transient covalent intermediate with DNA, while GyrB binds cofactors and catalyzes ATP hydrolysis. It depends on Mg(2+) as a cofactor. Mn(2+) is required as a cofactor. Ca(2+) serves as cofactor.

The protein localises to the cytoplasm. The catalysed reaction is ATP-dependent breakage, passage and rejoining of double-stranded DNA.. Functionally, a type II topoisomerase that negatively supercoils closed circular double-stranded (ds) DNA in an ATP-dependent manner to modulate DNA topology and maintain chromosomes in an underwound state. Negative supercoiling favors strand separation, and DNA replication, transcription, recombination and repair, all of which involve strand separation. Also able to catalyze the interconversion of other topological isomers of dsDNA rings, including catenanes and knotted rings. Type II topoisomerases break and join 2 DNA strands simultaneously in an ATP-dependent manner. The polypeptide is DNA gyrase subunit B (Rickettsia prowazekii (strain Madrid E)).